A 58-amino-acid chain; its full sequence is Basic phospholipase A2 homolog PocTX (58 aa).

C29 and C45 are disulfide-bonded.

Expressed by the venom gland.

Its subcellular location is the secreted. Its function is as follows. Wasp venom phospholipase A2 homolog that lacks enzymatic activity. This chain is Basic phospholipase A2 homolog PocTX, found in Polybia occidentalis (Paper wasp).